The following is a 158-amino-acid chain: Phosphopantetheine adenylyltransferase (158 aa).

Ser9 lines the substrate pocket. ATP contacts are provided by residues 9-10 (SF) and His17. 3 residues coordinate substrate: Lys41, Val73, and Lys87. ATP contacts are provided by residues 88–90 (GLR), Glu98, and 122–128 (YSFVSSS).

Belongs to the bacterial CoaD family. As to quaternary structure, homohexamer. The cofactor is Mg(2+).

It is found in the cytoplasm. It catalyses the reaction (R)-4'-phosphopantetheine + ATP + H(+) = 3'-dephospho-CoA + diphosphate. It participates in cofactor biosynthesis; coenzyme A biosynthesis; CoA from (R)-pantothenate: step 4/5. Its function is as follows. Reversibly transfers an adenylyl group from ATP to 4'-phosphopantetheine, yielding dephospho-CoA (dPCoA) and pyrophosphate. The protein is Phosphopantetheine adenylyltransferase of Mycobacterium sp. (strain JLS).